The primary structure comprises 420 residues: UDP-glucuronic acid decarboxylase 1 (420 aa).

At Met1 the chain carries N-acetylmethionine. Residues 1–19 are Cytoplasmic-facing; it reads MVSKALLRLVSAVNRRRMK. The helical; Signal-anchor for type II membrane protein transmembrane segment at 20 to 40 threads the bilayer; sequence LLLGIALLAYVASVWGNFVNM. Topologically, residues 41–420 are lumenal; it reads RSIQENGELK…RIKKGRTRHS (380 aa). Thr94 is subject to Phosphothreonine. Residues Gly98, Phe99, Val100, Asp119, Asn120, Phe122, Thr123, Gly124, Asp144, and Val145 each contribute to the NAD(+) site. Residues Leu149 and Tyr150 each contribute to the UDP-alpha-D-glucuronate site. Leu159 and Ser161 together coordinate NAD(+). UDP-alpha-D-glucuronate is bound at residue Lys177. Thr178 serves as a coordination point for NAD(+). UDP-alpha-D-glucuronate-binding residues include Asn185, Gly188, Lys191, and Arg192. Residues Ala200, Tyr231, and Lys235 each contribute to the NAD(+) site. Tyr231 (proton acceptor) is an active-site residue. Residues Tyr245, Gln248, and Glu249 each contribute to the UDP-alpha-D-glucuronate site. 3 residues coordinate NAD(+): Thr261, His267, and Arg272. Asn316 carries N-linked (GlcNAc...) asparagine glycosylation.

It belongs to the NAD(P)-dependent epimerase/dehydratase family. UDP-glucuronic acid decarboxylase subfamily. In terms of assembly, homodimer and homotetramer. Interacts with AKT1. NAD(+) is required as a cofactor.

It is found in the golgi apparatus. The protein localises to the golgi stack membrane. The enzyme catalyses UDP-alpha-D-glucuronate + H(+) = UDP-alpha-D-xylose + CO2. It functions in the pathway nucleotide-sugar biosynthesis; UDP-alpha-D-xylose biosynthesis; UDP-alpha-D-xylose from UDP-alpha-D-glucuronate: step 1/1. In terms of biological role, catalyzes the NAD-dependent decarboxylation of UDP-glucuronic acid to UDP-xylose. Necessary for the biosynthesis of the core tetrasaccharide in glycosaminoglycan biosynthesis. The protein is UDP-glucuronic acid decarboxylase 1 of Homo sapiens (Human).